Here is a 701-residue protein sequence, read N- to C-terminus: Polyribonucleotide nucleotidyltransferase (701 aa).

The Mg(2+) site is built by Asp-487 and Asp-493. Residues Pro-554 to Val-613 form the KH domain. One can recognise an S1 motif domain in the interval Gly-623–Lys-691.

This sequence belongs to the polyribonucleotide nucleotidyltransferase family. In terms of assembly, component of the RNA degradosome, which is a multiprotein complex involved in RNA processing and mRNA degradation. Requires Mg(2+) as cofactor.

It localises to the cytoplasm. The catalysed reaction is RNA(n+1) + phosphate = RNA(n) + a ribonucleoside 5'-diphosphate. Its function is as follows. Involved in mRNA degradation. Catalyzes the phosphorolysis of single-stranded polyribonucleotides processively in the 3'- to 5'-direction. This is Polyribonucleotide nucleotidyltransferase from Pseudomonas syringae pv. syringae (strain B728a).